Reading from the N-terminus, the 291-residue chain is N-acetylmannosamine kinase (291 aa).

ATP-binding positions include 5–12 (AIDIGGTK) and 132–139 (GVGGGVVS). Positions 156, 166, 168, and 173 each coordinate Zn(2+).

This sequence belongs to the ROK (NagC/XylR) family. NanK subfamily. Homodimer.

It catalyses the reaction an N-acyl-D-mannosamine + ATP = an N-acyl-D-mannosamine 6-phosphate + ADP + H(+). It participates in amino-sugar metabolism; N-acetylneuraminate degradation; D-fructose 6-phosphate from N-acetylneuraminate: step 2/5. Its function is as follows. Catalyzes the phosphorylation of N-acetylmannosamine (ManNAc) to ManNAc-6-P. The protein is N-acetylmannosamine kinase of Escherichia coli O9:H4 (strain HS).